The following is a 404-amino-acid chain: uncharacterized protein (404 aa).

The N-terminal stretch at 1–21 (MRKLGLALSIMGLLLVSIVAG) is a signal peptide. Position 22 is an N-acetylcysteine (Cys22). The S-archaeol cysteine moiety is linked to residue Cys22.

It belongs to the BMP lipoprotein family.

It is found in the cell membrane. This is an uncharacterized protein from Pyrococcus abyssi (strain GE5 / Orsay).